Reading from the N-terminus, the 358-residue chain is MSAQTITTTETTQNAQKPQQYHWRMVWRNIILYIIMHLTGFYGLYLAMFYAQWKTVFYSWFLLVIALQGVTAGSHRLWAHKAYKARLPLRMLLCIFQTLSLQNHIYDWATYHRVHHKFVDTNADPHNSRRGFFFSHMGWLFIEPHKDVEDKYKSIDFSDLHADSVVMIQKKYYHTFFAPVIGFYLPAAIPWYFWGENFWTAFFVATMLRYCACTNITFLVNSWAHIYGSRPYDKNIYPTESATIAVLTGGEGWHNYHHTFPWDYKTGEFGKYRSNLTTGFLDFMAAIGWAYDLKTVSEEMIMKRVLRTGDGTRKFDKIDKILNVDDDHHHEDMLWGWGDSDMAKEEMNYVKIHNRKED.

2 consecutive transmembrane segments (helical) span residues 30–50 (IILY…AMFY) and 55–75 (TVFY…AGSH). Fe cation contacts are provided by histidine 75, histidine 80, histidine 112, histidine 115, and histidine 116. The Histidine box-1 signature appears at 75 to 80 (HRLWAH). The Histidine box-2 motif lies at 112–116 (HRVHH). 2 helical membrane passes run 175–195 (TFFA…YFWG) and 200–220 (TAFF…TFLV). Histidine 225, histidine 254, histidine 257, and histidine 258 together coordinate Fe cation. Positions 254–258 (HNYHH) match the Histidine box-3 motif.

It belongs to the fatty acid desaturase type 1 family. It depends on Fe(2+) as a cofactor.

The protein localises to the membrane. The enzyme catalyses (9Z)-octadecenoyl-CoA + 2 Fe(II)-[cytochrome b5] + O2 + 2 H(+) = (9Z,12Z)-octadecadienoyl-CoA + 2 Fe(III)-[cytochrome b5] + 2 H2O. It carries out the reaction (9Z)-hexadecenoyl-CoA + 2 Fe(II)-[cytochrome b5] + O2 + 2 H(+) = (9Z,12Z)-hexadecadienoyl-CoA + 2 Fe(III)-[cytochrome b5] + 2 H2O. In terms of biological role, catalyzes the formation of a Delta12 double bond, acting on monounsaturated fatty acyl substrates like palmitoleoyl-CoA ((9Z)-hexadecenoyl-CoA) and oleoyl-CoA ((9Z)-octadecenoyl-CoA) with higher desaturation activity on (9Z)-octadecenoyl-CoA than (9Z)-hexadecenoyl-CoA. Requires preexisting cis double bond at the Delta9 position of fatty acyls to be able to insert the Delta12 double bond. Delta12-desaturation of (9Z)-octadecenoyl-CoA in insects produces (9Z,12Z)-octadecadienoyl-CoA (linoleoyl-CoA) which may be used to supply precursors of crucial mediators of immunity and reproduction and other essential functions. The protein is Acyl-CoA Delta-12 desaturase of Tribolium castaneum (Red flour beetle).